The chain runs to 360 residues: Chorismate synthase (360 aa).

NADP(+) is bound by residues Arg-48 and Arg-54. Residues 125–127, 246–247, Gly-286, 301–305, and Arg-327 each bind FMN; these read RSS, NA, and KPTSS.

The protein belongs to the chorismate synthase family. Homotetramer. The cofactor is FMNH2.

It carries out the reaction 5-O-(1-carboxyvinyl)-3-phosphoshikimate = chorismate + phosphate. It functions in the pathway metabolic intermediate biosynthesis; chorismate biosynthesis; chorismate from D-erythrose 4-phosphate and phosphoenolpyruvate: step 7/7. Catalyzes the anti-1,4-elimination of the C-3 phosphate and the C-6 proR hydrogen from 5-enolpyruvylshikimate-3-phosphate (EPSP) to yield chorismate, which is the branch point compound that serves as the starting substrate for the three terminal pathways of aromatic amino acid biosynthesis. This reaction introduces a second double bond into the aromatic ring system. In Actinobacillus pleuropneumoniae serotype 5b (strain L20), this protein is Chorismate synthase.